The following is a 493-amino-acid chain: Lysostaphin (493 aa).

The N-terminal stretch at 1-23 (MKKTKNNYYTRPLAIGLSTFALA) is a signal peptide. The propeptide occupies 24 to 247 (SIVYGGIQNE…ALVQNRTALR (224 aa)). 14 consecutive repeat copies span residues 49-61 (AEVE…VENT), 62-74 (AEVE…VENT), 75-87 (AEVE…VENT), 88-100 (AEVE…VENT), 101-113 (AEVE…VENT), 114-126 (AEVE…VENT), 127-139 (AEVE…VENT), 140-152 (AEVE…VENT), 153-165 (AEVE…VENT), 166-178 (AEVE…VENT), 179-191 (AEVE…VENT), 192-204 (AEVE…VENT), 205-217 (AEVE…VENT), and 218-230 (AEVE…VENT). Positions 49-243 (AEVETSKAPV…ETSKALVQNR (195 aa)) are 15 X 13 AA approximate tandem repeats of A-E-V-E-T-S-K-A-P-V-E-N-T. Residues 52 to 232 (ETSKAPVENT…SKAPVENTAE (181 aa)) form a disordered region. A 15; approximate repeat occupies 231–243 (AEVETSKALVQNR). Zn(2+) is bound by residues His-279 and Asp-283. His-360 is a catalytic residue. His-362 contributes to the Zn(2+) binding site. The 69-residue stretch at 413 to 481 (SESASFTPNT…YLPVRTWNKS (69 aa)) folds into the SH3b domain.

It belongs to the peptidase M23B family. As to quaternary structure, monomer. Zn(2+) serves as cofactor.

It localises to the secreted. It catalyses the reaction Hydrolysis of the -Gly-|-Gly- bond in the pentaglycine inter-peptide link joining staphylococcal cell wall peptidoglycans.. Lyses staphylococcal cells by hydrolyzing the polyglycine interpeptide bridges of the peptidoglycan. The protein is Lysostaphin (lss) of Staphylococcus simulans.